The following is a 76-amino-acid chain: Small ribosomal subunit protein bS18 (76 aa).

Belongs to the bacterial ribosomal protein bS18 family. Part of the 30S ribosomal subunit. Forms a tight heterodimer with protein bS6.

In terms of biological role, binds as a heterodimer with protein bS6 to the central domain of the 16S rRNA, where it helps stabilize the platform of the 30S subunit. The protein is Small ribosomal subunit protein bS18 of Mesoplasma florum (strain ATCC 33453 / NBRC 100688 / NCTC 11704 / L1) (Acholeplasma florum).